We begin with the raw amino-acid sequence, 369 residues long: DNA replication and repair protein RecF (369 aa).

Residue 30–37 (GQNGMGKT) participates in ATP binding.

The protein belongs to the RecF family.

The protein localises to the cytoplasm. The RecF protein is involved in DNA metabolism; it is required for DNA replication and normal SOS inducibility. RecF binds preferentially to single-stranded, linear DNA. It also seems to bind ATP. The polypeptide is DNA replication and repair protein RecF (Bacteroides thetaiotaomicron (strain ATCC 29148 / DSM 2079 / JCM 5827 / CCUG 10774 / NCTC 10582 / VPI-5482 / E50)).